The primary structure comprises 221 residues: Adenylate kinase (221 aa).

ATP is bound at residue 10–15 (GAGKGT). The segment at 30–59 (STGDMLRAAVKAGTPLGVEAKKVMDAGGLV) is NMP. Residues threonine 31, arginine 36, 57–59 (GLV), 85–88 (GFPR), and glutamine 92 each bind AMP. The segment at 122–159 (GRRVHVASGRTYHLKYNPPKTEGVDDETGEPLIQRDDD) is LID. Residues arginine 123 and 132-133 (TY) contribute to the ATP site. A disordered region spans residues 138–159 (NPPKTEGVDDETGEPLIQRDDD). 2 residues coordinate AMP: arginine 156 and arginine 167. Glycine 207 lines the ATP pocket.

It belongs to the adenylate kinase family. In terms of assembly, monomer.

The protein resides in the cytoplasm. It carries out the reaction AMP + ATP = 2 ADP. It functions in the pathway purine metabolism; AMP biosynthesis via salvage pathway; AMP from ADP: step 1/1. Catalyzes the reversible transfer of the terminal phosphate group between ATP and AMP. Plays an important role in cellular energy homeostasis and in adenine nucleotide metabolism. The chain is Adenylate kinase from Cupriavidus taiwanensis (strain DSM 17343 / BCRC 17206 / CCUG 44338 / CIP 107171 / LMG 19424 / R1) (Ralstonia taiwanensis (strain LMG 19424)).